A 59-amino-acid polypeptide reads, in one-letter code: Large ribosomal subunit protein eL29 (59 aa).

Positions 1–26 are enriched in basic residues; it reads MAKSKNHTAHNQTRKAHRNGIKKPKT. The tract at residues 1 to 37 is disordered; sequence MAKSKNHTAHNQTRKAHRNGIKKPKTYKYPSLKGVDP. A Glycyl lysine isopeptide (Lys-Gly) (interchain with G-Cter in ubiquitin) cross-link involves residue Lys52.

It belongs to the eukaryotic ribosomal protein eL29 family. Component of the large ribosomal subunit (LSU). Mature yeast ribosomes consist of a small (40S) and a large (60S) subunit. The 40S small subunit contains 1 molecule of ribosomal RNA (18S rRNA) and 33 different proteins (encoded by 57 genes). The large 60S subunit contains 3 rRNA molecules (25S, 5.8S and 5S rRNA) and 46 different proteins (encoded by 81 genes).

It is found in the cytoplasm. Functionally, component of the ribosome, a large ribonucleoprotein complex responsible for the synthesis of proteins in the cell. The small ribosomal subunit (SSU) binds messenger RNAs (mRNAs) and translates the encoded message by selecting cognate aminoacyl-transfer RNA (tRNA) molecules. The large subunit (LSU) contains the ribosomal catalytic site termed the peptidyl transferase center (PTC), which catalyzes the formation of peptide bonds, thereby polymerizing the amino acids delivered by tRNAs into a polypeptide chain. The nascent polypeptides leave the ribosome through a tunnel in the LSU and interact with protein factors that function in enzymatic processing, targeting, and the membrane insertion of nascent chains at the exit of the ribosomal tunnel. This Saccharomyces cerevisiae (strain ATCC 204508 / S288c) (Baker's yeast) protein is Large ribosomal subunit protein eL29.